The sequence spans 906 residues: Putative disease resistance protein At1g59780 (906 aa).

Positions 20 to 59 (KLLSQEYERFQGVEEQITELRDDLKMLMAFLSDADAKKQT) form a coiled coil. The 315-residue stretch at 138–452 (SHAQLERKRE…AEGITYPGNY (315 aa)) folds into the NB-ARC domain. 187–194 (GLGGLGKT) provides a ligand contact to ATP. LRR repeat units lie at residues 572-597 (LPLLRVLDLDGAKFKGGKLPSSIGKL), 599-619 (HLKYLSLYQASVTYLPSSLRN), 620-644 (LKSLLYLNLRINSGQLINVPNVFKE), and 825-850 (MPLLHTLHIVDCKKLKEIPDGLRFIS).

The protein belongs to the disease resistance NB-LRR family.

In terms of biological role, potential disease resistance protein. The chain is Putative disease resistance protein At1g59780 from Arabidopsis thaliana (Mouse-ear cress).